Consider the following 184-residue polypeptide: GTP cyclohydrolase 1 (184 aa).

Zn(2+) contacts are provided by Cys-75, His-78, and Cys-146.

This sequence belongs to the GTP cyclohydrolase I family. As to quaternary structure, homomer.

It carries out the reaction GTP + H2O = 7,8-dihydroneopterin 3'-triphosphate + formate + H(+). Its pathway is cofactor biosynthesis; 7,8-dihydroneopterin triphosphate biosynthesis; 7,8-dihydroneopterin triphosphate from GTP: step 1/1. The protein is GTP cyclohydrolase 1 of Streptococcus pneumoniae (strain ATCC 700669 / Spain 23F-1).